Consider the following 440-residue polypeptide: Protein scalloped (440 aa).

The tract at residues 32–65 (TEQQAVGPGTIPSPWTPVNAGPPGALGSADTNGS) is disordered. The TEA DNA-binding region spans 86–162 (SADAEGVWSP…QVLARRKLRE (77 aa)).

In terms of assembly, the C-terminus of sd interacts with the C-terminal serine-rich protein domain of vg, to form a complex which acts as a selector for wing development. Interacts (via C-terminus) with yki (via N-terminus) and this interaction enhances its transcriptional activity. As to expression, subset of neuroblasts in the central nervous system and in the peripheral sense organs of the embryo. Expressed in the developing wing primordia initially along the D/V wing boundary, and by the late third larval instar, maximal expression is seen in cells at the D/V wing disk boundary. Less expression in cells located farther from this boundary. Also expressed in wing progenitor cells.

It localises to the nucleus. In terms of biological role, transcription factor which plays a key role in the Hippo/SWH (Sav/Wts/Hpo) signaling pathway, a signaling pathway that plays a pivotal role in organ size control and tumor suppression by restricting proliferation and promoting apoptosis. The core of this pathway is composed of a kinase cascade wherein Hippo (Hpo), in complex with its regulatory protein Salvador (Sav), phosphorylates and activates Warts (Wts) in complex with its regulatory protein Mats, which in turn phosphorylates and inactivates the Yorkie (Yki) oncoprotein. The Hippo/SWH signaling pathway inhibits the activity of the transcriptional complex formed by Scalloped (sd) and Yki and the target genes of this pathway include cyclin-E (cycE), diap1 and bantam. Sd promotes nuclear localization of Yki. Involved in the regulation of cell-specific gene expression during development, particularly in the differentiation of the nervous system. When in combination with vestigial (vg) it acts as a transcriptional activation complex that regulates gene expression in the wing. Binding to vg switches the DNA target selectivity of sd. Required autonomously for cell proliferation and viability within the wing blade. Required for proper sensory organ precursor (SOP) differentiation at the wing margin; required for correct expression of sens. In Drosophila melanogaster (Fruit fly), this protein is Protein scalloped (sd).